A 145-amino-acid chain; its full sequence is Protein MMF1, mitochondrial (145 aa).

Residues 1-17 (MFLRNSVLRTAPVLRRG) constitute a mitochondrion transit peptide.

This sequence belongs to the RutC family.

It is found in the mitochondrion matrix. In terms of biological role, plays a role in the maintenance of mitochondrial DNA. The protein is Protein MMF1, mitochondrial (MMF1) of Saccharomyces cerevisiae (strain ATCC 204508 / S288c) (Baker's yeast).